The following is a 249-amino-acid chain: Secretion system apparatus lipoprotein SsaJ (249 aa).

The N-terminal stretch at 1–18 is a signal peptide; sequence MKVHRIVFLTVLTFFLTA. Cys-19 carries the N-palmitoyl cysteine lipid modification. A lipid anchor (S-diacylglycerol cysteine) is attached at Cys-19. The chain crosses the membrane as a helical span at residues 225–245; that stretch reads LMLSLTGLLLGVGILIGYFCL.

The protein belongs to the YscJ lipoprotein family.

It localises to the cell outer membrane. Component of Salmonella pathogenicity island 2 (SPI-2) type III secretion system, required for secretion of some type III-secreted effectors including the SpvB exotoxin. The polypeptide is Secretion system apparatus lipoprotein SsaJ (ssaJ) (Salmonella typhimurium (strain 14028s / SGSC 2262)).